A 443-amino-acid polypeptide reads, in one-letter code: MPFVPHSPEDVSVMLDAIGVNTIEDLFADIPAEMRPKSFALPKGLSEMDVCSRLEALSARNRTDVVSFLGAGFYDHHIPKAVDALSSRGEFYTAYTPYQPEAAQGTLQAIFEFQTAVCRLLDMDCANASVYDGGSALFEAMMMAVRATRRRKLVIDEALSPIYRTMLASYTSNLQLELVTVPHRDGLSDMDALKASVDDTCAAVVVQNPNFFGAITDFTDLFTHARAHKALGVISVYPVMQSVLKTPGEMGADIAVADGQSIGQPLSFGGPYLGIMTCTKPLVRQIPGRIVGRTQDVDGRTGYVLTLQAREQHIRRAKATSNICSNQALCALRSLIHLTLLGPEGLVRTAELSMERARYAAERLTALPGVELLHDAPFGNEFAVRLPVSAFEVVDRLTARGYVPGFPVGRYYPGMDNVLLVACTEKHSFEQVGILAEMLGGIL.

It belongs to the GcvP family. N-terminal subunit subfamily. In terms of assembly, the glycine cleavage system is composed of four proteins: P, T, L and H. In this organism, the P 'protein' is a heterodimer of two subunits.

It catalyses the reaction N(6)-[(R)-lipoyl]-L-lysyl-[glycine-cleavage complex H protein] + glycine + H(+) = N(6)-[(R)-S(8)-aminomethyldihydrolipoyl]-L-lysyl-[glycine-cleavage complex H protein] + CO2. Functionally, the glycine cleavage system catalyzes the degradation of glycine. The P protein binds the alpha-amino group of glycine through its pyridoxal phosphate cofactor; CO(2) is released and the remaining methylamine moiety is then transferred to the lipoamide cofactor of the H protein. The chain is Probable glycine dehydrogenase (decarboxylating) subunit 1 from Nitratidesulfovibrio vulgaris (strain ATCC 29579 / DSM 644 / CCUG 34227 / NCIMB 8303 / VKM B-1760 / Hildenborough) (Desulfovibrio vulgaris).